A 334-amino-acid chain; its full sequence is Methionine adenosyltransferase 2 subunit beta (334 aa).

NADP(+) contacts are provided by residues 37 to 40 (TGLL), 60 to 62 (FRR), 71 to 72 (NL), C93, R97, Y159, and L185. T309 carries the phosphothreonine modification. Residues 319–334 (LWPFLIDKRWRQTVFH) are required for interaction with MAT2A.

This sequence belongs to the dTDP-4-dehydrorhamnose reductase family. MAT2B subfamily. Heterotrimer; composed of a catalytic MAT2A homodimer that binds one regulatory MAT2B chain. Heterohexamer; composed of a central, catalytic MAT2A homotetramer flanked on either side by a regulatory MAT2B chain. NADP binding increases the affinity for MAT2A.

It participates in amino-acid biosynthesis; S-adenosyl-L-methionine biosynthesis; S-adenosyl-L-methionine from L-methionine: step 1/1. Its function is as follows. Regulatory subunit of S-adenosylmethionine synthetase 2, an enzyme that catalyzes the formation of S-adenosylmethionine from methionine and ATP. Regulates MAT2A catalytic activity by changing its kinetic properties, increasing its affinity for L-methionine. Can bind NADP (in vitro). This chain is Methionine adenosyltransferase 2 subunit beta (Mat2b), found in Rattus norvegicus (Rat).